Here is a 317-residue protein sequence, read N- to C-terminus: Probable transcription factor At5g61620 (317 aa).

The CCHC-type zinc-finger motif lies at 12–25 (CSHCGHNGHNARTC). The interval 77 to 111 (DPIAAVDDTGYHSDGQIHSKKGKTAHEKKKGKPWT) is disordered. The span at 94–108 (HSKKGKTAHEKKKGK) shows a compositional bias: basic residues. The HTH myb-type domain maps to 102-158 (HEKKKGKPWTEEEHRNFLIGLNKLGKGDWRGIAKSFVSTRTPTQVASHAQKYFIRLN). Positions 130–154 (WRGIAKSFVSTRTPTQVASHAQKYF) form a DNA-binding region, H-T-H motif. Residues 173-206 (SLEDQKEKERNSQDASTKTPPKQPITGIQQPVVQ) are disordered. A compositionally biased stretch (basic and acidic residues) spans 175 to 184 (EDQKEKERNS). Positions 185-206 (QDASTKTPPKQPITGIQQPVVQ) are enriched in polar residues.

It is found in the nucleus. In terms of biological role, probable transcription factor involved in somatic embryogenesis. Acts as a positive regulator of BHLH109. The protein is Probable transcription factor At5g61620 of Arabidopsis thaliana (Mouse-ear cress).